Reading from the N-terminus, the 511-residue chain is Bifunctional purine biosynthesis protein PurH (511 aa).

Residues 1-147 enclose the MGS-like domain; that stretch reads MIQIKRALIS…KNYKHTLVLT (147 aa).

It belongs to the PurH family.

It carries out the reaction (6R)-10-formyltetrahydrofolate + 5-amino-1-(5-phospho-beta-D-ribosyl)imidazole-4-carboxamide = 5-formamido-1-(5-phospho-D-ribosyl)imidazole-4-carboxamide + (6S)-5,6,7,8-tetrahydrofolate. It catalyses the reaction IMP + H2O = 5-formamido-1-(5-phospho-D-ribosyl)imidazole-4-carboxamide. The protein operates within purine metabolism; IMP biosynthesis via de novo pathway; 5-formamido-1-(5-phospho-D-ribosyl)imidazole-4-carboxamide from 5-amino-1-(5-phospho-D-ribosyl)imidazole-4-carboxamide (10-formyl THF route): step 1/1. Its pathway is purine metabolism; IMP biosynthesis via de novo pathway; IMP from 5-formamido-1-(5-phospho-D-ribosyl)imidazole-4-carboxamide: step 1/1. The sequence is that of Bifunctional purine biosynthesis protein PurH from Leptospira borgpetersenii serovar Hardjo-bovis (strain JB197).